The chain runs to 218 residues: Lactosylceramide 4-alpha-galactosyltransferase (218 aa).

The DXD motif motif lies at 57–59 (DTD).

The protein belongs to the glycosyltransferase 32 family.

The protein localises to the golgi apparatus membrane. The enzyme catalyses a beta-D-Gal-(1-&gt;4)-beta-D-Glc-(1&lt;-&gt;1)-Cer(d18:1(4E)) + UDP-alpha-D-galactose = a globoside Gb3Cer (d18:1(4E)) + UDP + H(+). It catalyses the reaction a beta-D-Gal-(1&lt;-&gt;1')-ceramide + UDP-alpha-D-galactose = alpha-D-Gal-(1-&gt;4)-beta-D-Gal-(1&lt;-&gt;1')-Cer + UDP + H(+). It functions in the pathway glycolipid biosynthesis. Catalyzes the transfer of galactose from UDP-alpha-D-galactose to lactosylceramide/beta-D-galactosyl-(1-&gt;4)-beta-D-glucosyl-(1&lt;-&gt;1)-ceramide(d18:1(4E)) to produce globotriaosylceramide/globoside Gb3Cer (d18:1(4E)). Also able to transfer galactose to galactosylceramide/beta-D-Gal-(1&lt;-&gt;1')-Cer. Globoside Gb3Cer is a glycosphingolipid of the globo serie, one of the major types of neutral root structures of glycosphingolipids, that constitute a significant portion of mammalian cell membranes. In Pongo pygmaeus (Bornean orangutan), this protein is Lactosylceramide 4-alpha-galactosyltransferase (A4GALT).